The following is a 487-amino-acid chain: UPF0324 membrane protein NE0724 (487 aa).

The next 11 membrane-spanning stretches (helical) occupy residues 19–38 (WAVWLGLIMFMASVSSLWGW), 71–93 (PALSLLVTYLVFTALTCLAAWSM), 100–119 (FFIGWTILFIMTWVIWIIGN), 139–161 (LSLGSGFSYLLALLVGLVIGNFF), 181–200 (AIVFLGIKIGVMSIEAAGFI), 204–226 (VMTGVAATFVAYMLFWPIVYALG), 269–291 (VSILVVIFAMFELIILPGFYTAI), 350–369 (IWIDMFIGVWAFVLALVWVY), 389–411 (FPKFVLGYLLVWFSYIMLASSGS), 426–443 (GPMRNMMFMLTFISIGII), and 456–478 (ALLYAIALFGIIAPIAYGVAWIF).

This sequence belongs to the UPF0324 family.

Its subcellular location is the cell membrane. This is UPF0324 membrane protein NE0724 from Nitrosomonas europaea (strain ATCC 19718 / CIP 103999 / KCTC 2705 / NBRC 14298).